The following is a 475-amino-acid chain: Ribulose bisphosphate carboxylase large chain (475 aa).

Residues 1 to 2 constitute a propeptide that is removed on maturation; the sequence is MS. Pro-3 is subject to N-acetylproline. At Lys-14 the chain carries N6,N6,N6-trimethyllysine. Substrate contacts are provided by Asn-123 and Thr-173. Lys-175 serves as the catalytic Proton acceptor. Lys-177 contributes to the substrate binding site. Mg(2+) is bound by residues Lys-201, Asp-203, and Glu-204. An N6-carboxylysine modification is found at Lys-201. His-294 functions as the Proton acceptor in the catalytic mechanism. Substrate-binding residues include Arg-295, His-327, and Ser-379.

The protein belongs to the RuBisCO large chain family. Type I subfamily. Heterohexadecamer of 8 large chains and 8 small chains; disulfide-linked. The disulfide link is formed within the large subunit homodimers. The cofactor is Mg(2+). In terms of processing, the disulfide bond which can form in the large chain dimeric partners within the hexadecamer appears to be associated with oxidative stress and protein turnover.

The protein resides in the plastid. It is found in the chloroplast. It carries out the reaction 2 (2R)-3-phosphoglycerate + 2 H(+) = D-ribulose 1,5-bisphosphate + CO2 + H2O. The enzyme catalyses D-ribulose 1,5-bisphosphate + O2 = 2-phosphoglycolate + (2R)-3-phosphoglycerate + 2 H(+). RuBisCO catalyzes two reactions: the carboxylation of D-ribulose 1,5-bisphosphate, the primary event in carbon dioxide fixation, as well as the oxidative fragmentation of the pentose substrate in the photorespiration process. Both reactions occur simultaneously and in competition at the same active site. This Quercus rubra (Northern red oak) protein is Ribulose bisphosphate carboxylase large chain.